The sequence spans 904 residues: Envelope glycoprotein (904 aa).

Over 1-726 (MDQDLDGAER…LFDWTSWKDW (726 aa)) the chain is Extracellular. Asparagine 131, asparagine 255, asparagine 277, asparagine 296, asparagine 329, asparagine 367, asparagine 376, asparagine 385, asparagine 410, asparagine 427, asparagine 432, asparagine 452, asparagine 491, asparagine 509, and asparagine 541 each carry an N-linked (GlcNAc...) asparagine; by host glycan. Residues 556–576 (AVGLAIFLLVLAIMAITSSLV) are fusion peptide. Residues 588–638 (AKVVERVVQNVSYIAQTQDQFTHLFRNINNRLNVLHHRVSYLEYVEEIRQK) are a coiled coil. Asparagine 597 is a glycosylation site (N-linked (GlcNAc...) asparagine; by host). Residues 615–631 (INNRLNVLHHRVSYLEY) form an immunosuppression region. Asparagine 663 and asparagine 694 each carry an N-linked (GlcNAc...) asparagine; by host glycan. The stretch at 676-712 (DEYDKIEEKILKIRVDWLNSSLSDTQDTFGLETSIFD) forms a coiled coil. The chain crosses the membrane as a helical span at residues 727 to 747 (IKIIIVIIVLWLLIKILLGML). Residues 748 to 904 (RSCAKVSQNY…AWYEGLRGSQ (157 aa)) are Cytoplasmic-facing. Disordered regions lie at residues 761–783 (PAEE…PASG) and 862–904 (GGTS…RGSQ). The segment covering 878 to 887 (WTGSREQNNP) has biased composition (polar residues).

As to quaternary structure, the mature envelope protein (Env) consists of a trimer of SU-TM heterodimers attached by non-covalent interactions or by a labile interchain disulfide bond. Specific enzymatic cleavages in vivo yield mature proteins. Envelope glycoproteins are synthesized as an inactive precursor that is N-glycosylated and processed likely by host cell furin or by a furin-like protease in the Golgi to yield the mature SU and TM proteins. The cleavage site between SU and TM requires the minimal sequence [KR]-X-[KR]-R.

It localises to the virion membrane. The protein localises to the host cell membrane. Functionally, the surface protein (SU) attaches the virus to the host cell by binding to its receptor. This interaction triggers the refolding of the transmembrane protein (TM) and is thought to activate its fusogenic potential by unmasking its fusion peptide. Fusion occurs at the host cell plasma membrane. In terms of biological role, the transmembrane protein (TM) acts as a class I viral fusion protein. Under the current model, the protein has at least 3 conformational states: pre-fusion native state, pre-hairpin intermediate state, and post-fusion hairpin state. During viral and target cell membrane fusion, the coiled coil regions (heptad repeats) assume a trimer-of-hairpins structure, positioning the fusion peptide in close proximity to the C-terminal region of the ectodomain. The formation of this structure appears to drive apposition and subsequent fusion of viral and target cell membranes. Membranes fusion leads to delivery of the nucleocapsid into the cytoplasm. The polypeptide is Envelope glycoprotein (env) (Bovine immunodeficiency virus (strain R29) (BIV)).